The primary structure comprises 433 residues: Serine hydroxymethyltransferase (433 aa).

121–123 (AHV) is a binding site for (6S)-5,6,7,8-tetrahydrofolate. Residue Lys-227 is modified to N6-(pyridoxal phosphate)lysine. Glu-243 is a binding site for (6S)-5,6,7,8-tetrahydrofolate.

The protein belongs to the SHMT family. In terms of assembly, homodimer. Pyridoxal 5'-phosphate serves as cofactor.

Its subcellular location is the cytoplasm. It participates in amino-acid biosynthesis; glycine biosynthesis; glycine from L-serine: step 1/1. Catalyzes the reversible interconversion of serine and glycine with a modified folate serving as the one-carbon carrier. Also exhibits a pteridine-independent aldolase activity toward beta-hydroxyamino acids, producing glycine and aldehydes, via a retro-aldol mechanism. The polypeptide is Serine hydroxymethyltransferase (Saccharolobus islandicus (strain Y.G.57.14 / Yellowstone #1) (Sulfolobus islandicus)).